The sequence spans 87 residues: HssA/B-like protein 8 (87 aa).

Positions 1-22 (MSILSALTSISNPMKSTKSSVA) are enriched in polar residues. A disordered region spans residues 1 to 24 (MSILSALTSISNPMKSTKSSVANG).

This sequence belongs to the hssA/B family.

This chain is HssA/B-like protein 8 (hssl8), found in Dictyostelium discoideum (Social amoeba).